The primary structure comprises 213 residues: Holliday junction branch migration complex subunit RuvA (213 aa).

The interval methionine 1–alanine 63 is domain I. The tract at residues aspartate 64–alanine 140 is domain II. Residues alanine 140–alanine 144 are flexible linker. The tract at residues alanine 145–glycine 213 is domain III.

The protein belongs to the RuvA family. Homotetramer. Forms an RuvA(8)-RuvB(12)-Holliday junction (HJ) complex. HJ DNA is sandwiched between 2 RuvA tetramers; dsDNA enters through RuvA and exits via RuvB. An RuvB hexamer assembles on each DNA strand where it exits the tetramer. Each RuvB hexamer is contacted by two RuvA subunits (via domain III) on 2 adjacent RuvB subunits; this complex drives branch migration. In the full resolvosome a probable DNA-RuvA(4)-RuvB(12)-RuvC(2) complex forms which resolves the HJ.

Its subcellular location is the cytoplasm. The RuvA-RuvB-RuvC complex processes Holliday junction (HJ) DNA during genetic recombination and DNA repair, while the RuvA-RuvB complex plays an important role in the rescue of blocked DNA replication forks via replication fork reversal (RFR). RuvA specifically binds to HJ cruciform DNA, conferring on it an open structure. The RuvB hexamer acts as an ATP-dependent pump, pulling dsDNA into and through the RuvAB complex. HJ branch migration allows RuvC to scan DNA until it finds its consensus sequence, where it cleaves and resolves the cruciform DNA. The polypeptide is Holliday junction branch migration complex subunit RuvA (Pseudarthrobacter chlorophenolicus (strain ATCC 700700 / DSM 12829 / CIP 107037 / JCM 12360 / KCTC 9906 / NCIMB 13794 / A6) (Arthrobacter chlorophenolicus)).